Consider the following 939-residue polypeptide: Protein translocase subunit SecA 1 (939 aa).

Residues Gln-85, Gly-103–Thr-107, and Asp-504 each bind ATP. A disordered region spans residues Glu-848 to Lys-939. 3 stretches are compositionally biased toward basic and acidic residues: residues Glu-852–Ala-863, Pro-872–His-889, and Pro-914–Ala-925. Basic residues predominate over residues Glu-926–Lys-939.

It belongs to the SecA family. Monomer and homodimer. Part of the essential Sec protein translocation apparatus which comprises SecA, SecYEG and auxiliary proteins SecDF. Other proteins may also be involved.

Its subcellular location is the cell membrane. It is found in the cytoplasm. The catalysed reaction is ATP + H2O + cellular proteinSide 1 = ADP + phosphate + cellular proteinSide 2.. Its function is as follows. Part of the Sec protein translocase complex. Interacts with the SecYEG preprotein conducting channel. Has a central role in coupling the hydrolysis of ATP to the transfer of proteins into and across the cell membrane, serving as an ATP-driven molecular motor driving the stepwise translocation of polypeptide chains across the membrane. The chain is Protein translocase subunit SecA 1 from Streptomyces avermitilis (strain ATCC 31267 / DSM 46492 / JCM 5070 / NBRC 14893 / NCIMB 12804 / NRRL 8165 / MA-4680).